The primary structure comprises 188 residues: Adenine phosphoribosyltransferase (188 aa).

This sequence belongs to the purine/pyrimidine phosphoribosyltransferase family. Homodimer.

Its subcellular location is the cytoplasm. It catalyses the reaction AMP + diphosphate = 5-phospho-alpha-D-ribose 1-diphosphate + adenine. It functions in the pathway purine metabolism; AMP biosynthesis via salvage pathway; AMP from adenine: step 1/1. Catalyzes a salvage reaction resulting in the formation of AMP, that is energically less costly than de novo synthesis. The sequence is that of Adenine phosphoribosyltransferase from Neisseria meningitidis serogroup C (strain 053442).